Consider the following 257-residue polypeptide: Phycoerythrobilin:ferredoxin oxidoreductase (257 aa).

This sequence belongs to the HY2 family.

It carries out the reaction (3Z)-phycoerythrobilin + oxidized 2[4Fe-4S]-[ferredoxin] = 15,16-dihydrobiliverdin + reduced 2[4Fe-4S]-[ferredoxin] + 2 H(+). In terms of biological role, catalyzes the two-electron reduction of the C2 and C3(1) diene system of 15,16-dihydrobiliverdin. This Prochlorococcus marinus (strain SARG / CCMP1375 / SS120) protein is Phycoerythrobilin:ferredoxin oxidoreductase (pebB).